A 247-amino-acid chain; its full sequence is Ribosomal RNA small subunit methyltransferase G (247 aa).

S-adenosyl-L-methionine is bound by residues Gly-84, Phe-89, 136–137 (AE), and Arg-155.

It belongs to the methyltransferase superfamily. RNA methyltransferase RsmG family.

The protein resides in the cytoplasm. Its function is as follows. Specifically methylates the N7 position of a guanine in 16S rRNA. This Prochlorococcus marinus (strain MIT 9303) protein is Ribosomal RNA small subunit methyltransferase G.